Here is a 350-residue protein sequence, read N- to C-terminus: Homeobox-leucine zipper protein HOX5 (350 aa).

A DNA-binding region (homeobox) is located at residues 83–142 (APEKKRRLTAEQVQMLERSFEEENKLEPERKTELARRLGMAPRQVAVWFQNRRARWKTKQ). Residues 141 to 185 (KQLEHDFDRLKAAYDALAADHHALLSDNDRLRAQVISLTEKLQDK) form a leucine-zipper region. The interval 180–254 (EKLQDKETSP…TNDDGDGGGA (75 aa)) is disordered. Over residues 188 to 198 (SPSSATITTAA) the composition is skewed to low complexity.

It belongs to the HD-ZIP homeobox family. Class I subfamily. In terms of assembly, homodimer. May form a heterodimer with HOX4. In terms of tissue distribution, expressed in seedlings, roots, leaves, nodes, internodes, flowers and embryo.

It localises to the nucleus. Its function is as follows. Probable transcription activator that binds to the DNA sequence 5'-CAAT[AT]ATTG-3'. The protein is Homeobox-leucine zipper protein HOX5 (HOX5) of Oryza sativa subsp. indica (Rice).